The following is a 252-amino-acid chain: Cell division protein ZapD (252 aa).

The protein belongs to the ZapD family. Interacts with FtsZ.

The protein resides in the cytoplasm. Cell division factor that enhances FtsZ-ring assembly. Directly interacts with FtsZ and promotes bundling of FtsZ protofilaments, with a reduction in FtsZ GTPase activity. This is Cell division protein ZapD from Chromobacterium violaceum (strain ATCC 12472 / DSM 30191 / JCM 1249 / CCUG 213 / NBRC 12614 / NCIMB 9131 / NCTC 9757 / MK).